Consider the following 78-residue polypeptide: Lantibiotic cinnamycin (78 aa).

Residues 1-59 (MTASILQQSVVDADFRAALLENPAAFGASAAALPTPVEAQDQASLDFWTKDIAATEAFA) constitute a propeptide that is removed on maturation. 2 cross-links (beta-methyllanthionine (Cys-Thr)) span residues 60 to 77 (CRQS…DGNT) and 64 to 70 (CSFGPFT). Positions 63–73 (SCSFGPFTFVC) form a cross-link, lanthionine (Ser-Cys). The lysinoalanine (Ser-Lys) cross-link spans 65–78 (SFGPFTFVCDGNTK). A (3R)-3-hydroxyaspartate modification is found at Asp-74.

This sequence belongs to the type B lantibiotic family. Post-translationally, maturation of lantibiotics involves the enzymatic conversion of Thr, and Ser into dehydrated AA and the formation of thioether bonds with cysteine or the formation of dialkylamine bonds with lysine. This is followed by membrane translocation and cleavage of the modified precursor.

Can act as inhibitor of the enzyme phospholipase A2, and of the angiotensin-converting enzyme. Shows inhibitory activities against herpes simplex virus and immunopotentiating activities. Its antimicrobial activities are not very pronounced. The sequence is that of Lantibiotic cinnamycin (cinA) from Streptomyces griseoverticillatus (Streptoverticillium griseoverticillatum).